Here is a 270-residue protein sequence, read N- to C-terminus: MDLIQIIVLAIVQGLTEFLPVSSSAHLILFPHLVGWDDQGLAFDVAVHLGTLAAVVWYFRQEVFGMTRDWFASLARRERVGDSRLAWAVILGTIPAGIAGLLFKGFIEEQMRSPLVIAWATIGFGLLLWWSDVVSRRTPQPRDEHSLSWKDILLIGCAQALALIPGTSRSGVTMTAGLLLGLSRSGAARFSFLLSIPIIVLASGLSTLDLVEGEVAVDWTAMGLGVVLSAISAYLCIHFFLKLLERVGMLPFVIYRLILGAVLLVLFSGV.

The next 8 membrane-spanning stretches (helical) occupy residues M1 to V21, Q39 to F59, W87 to I107, P114 to V134, L147 to T167, F190 to L210, A221 to L241, and V247 to F267.

It belongs to the UppP family.

Its subcellular location is the cell inner membrane. It carries out the reaction di-trans,octa-cis-undecaprenyl diphosphate + H2O = di-trans,octa-cis-undecaprenyl phosphate + phosphate + H(+). Functionally, catalyzes the dephosphorylation of undecaprenyl diphosphate (UPP). Confers resistance to bacitracin. In Stutzerimonas stutzeri (strain A1501) (Pseudomonas stutzeri), this protein is Undecaprenyl-diphosphatase 2.